The chain runs to 282 residues: MNLFQAIILGIIQGLTEFLPISSSAHLRIVPALMGWGDPGAAFTAIIQIGTLAAVLIYFAKDIVSISGAVISGLVKGKPLGTDEARTGWMIAVGTIPIVVFGLTFKHEIETVLRSLYIVSASMIGLALVLVVAEKHTANRARDGRRGKSINELSWTDAIIIGLAQAMALIPGSSRSGVTITGGLFRNLDRETAARFSFLLSLPSVFAAGMLELYQTRQEIMSSTHNMLNLAVATIAAFIFGYLSIAFLLNYLKRHTTGIFIAYRLILGIGLIVMIGTGHLLP.

A run of 8 helical transmembrane segments spans residues 1 to 21 (MNLFQAIILGIIQGLTEFLPI), 40 to 60 (GAAFTAIIQIGTLAAVLIYFA), 89 to 109 (WMIAVGTIPIVVFGLTFKHEI), 112 to 132 (VLRSLYIVSASMIGLALVLVV), 153 to 173 (LSWTDAIIIGLAQAMALIPGS), 196 to 216 (FSFLLSLPSVFAAGMLELYQT), 228 to 248 (LNLAVATIAAFIFGYLSIAFL), and 258 to 278 (GIFIAYRLILGIGLIVMIGTG).

This sequence belongs to the UppP family.

Its subcellular location is the cell inner membrane. It carries out the reaction di-trans,octa-cis-undecaprenyl diphosphate + H2O = di-trans,octa-cis-undecaprenyl phosphate + phosphate + H(+). In terms of biological role, catalyzes the dephosphorylation of undecaprenyl diphosphate (UPP). Confers resistance to bacitracin. The polypeptide is Undecaprenyl-diphosphatase (Chlorobaculum tepidum (strain ATCC 49652 / DSM 12025 / NBRC 103806 / TLS) (Chlorobium tepidum)).